The sequence spans 474 residues: Trehalose-6-phosphate synthase (474 aa).

Arg10 lines the D-glucose 6-phosphate pocket. 22 to 23 (GG) lines the UDP-alpha-D-glucose pocket. D-glucose 6-phosphate is bound by residues Tyr77 and Asp131. Residues Arg263 and Lys268 each coordinate UDP-alpha-D-glucose. D-glucose 6-phosphate is bound at residue Arg301. UDP-alpha-D-glucose contacts are provided by residues Phe340 and 366–370 (LVAKE).

Belongs to the glycosyltransferase 20 family. As to quaternary structure, homotetramer.

It carries out the reaction D-glucose 6-phosphate + UDP-alpha-D-glucose = alpha,alpha-trehalose 6-phosphate + UDP + H(+). It functions in the pathway glycan biosynthesis; trehalose biosynthesis. Its function is as follows. Probably involved in the osmoprotection via the biosynthesis of trehalose. Catalyzes the transfer of glucose from UDP-alpha-D-glucose (UDP-Glc) to D-glucose 6-phosphate (Glc-6-P) to form trehalose-6-phosphate. Acts with retention of the anomeric configuration of the UDP-sugar donor. The polypeptide is Trehalose-6-phosphate synthase (Klebsiella pneumoniae subsp. pneumoniae (strain ATCC 700721 / MGH 78578)).